A 160-amino-acid polypeptide reads, in one-letter code: E3 ubiquitin ligase complex SCF subunit sconC (160 aa).

Residues 101 to 160 (ILAANYLDIKALLDVGCKTVANMIKGKSPEEIRKTFNIQNDFTPEEEDQIRRENEWAEDR) form an interaction with the F-box domain of F-box proteins region.

The protein belongs to the SKP1 family. Component of the SCF (SKP1-CUL1-F-box protein) E3 ubiquitin ligase complexes.

It functions in the pathway protein modification; protein ubiquitination. Essential component of the SCF (SKP1-CUL1-F-box protein) E3 ubiquitin ligase complexes, which mediate the ubiquitination and subsequent proteasomal degradation of target proteins. Controls sulfur metabolite repression, probably by mediating the inactivation or degradation of the metR transcription factor. The polypeptide is E3 ubiquitin ligase complex SCF subunit sconC (sconC) (Talaromyces stipitatus (strain ATCC 10500 / CBS 375.48 / QM 6759 / NRRL 1006) (Penicillium stipitatum)).